The following is a 242-amino-acid chain: Probable transcriptional regulatory protein NMA1902 (242 aa).

It belongs to the TACO1 family.

It localises to the cytoplasm. In Neisseria meningitidis serogroup A / serotype 4A (strain DSM 15465 / Z2491), this protein is Probable transcriptional regulatory protein NMA1902.